Here is a 421-residue protein sequence, read N- to C-terminus: UDP-N-acetylglucosamine 1-carboxyvinyltransferase 1 (421 aa).

22–23 lines the phosphoenolpyruvate pocket; sequence KN. Residue Arg95 participates in UDP-N-acetyl-alpha-D-glucosamine binding. The Proton donor role is filled by Cys119. The residue at position 119 (Cys119) is a 2-(S-cysteinyl)pyruvic acid O-phosphothioketal. UDP-N-acetyl-alpha-D-glucosamine-binding positions include 124–128, Asp308, and Val330; that span reads RPIEQ.

Belongs to the EPSP synthase family. MurA subfamily.

It is found in the cytoplasm. It catalyses the reaction phosphoenolpyruvate + UDP-N-acetyl-alpha-D-glucosamine = UDP-N-acetyl-3-O-(1-carboxyvinyl)-alpha-D-glucosamine + phosphate. It participates in cell wall biogenesis; peptidoglycan biosynthesis. Its function is as follows. Cell wall formation. Adds enolpyruvyl to UDP-N-acetylglucosamine. This is UDP-N-acetylglucosamine 1-carboxyvinyltransferase 1 from Staphylococcus aureus (strain MRSA252).